The chain runs to 254 residues: Autophagy-related protein 5 (254 aa).

K102 is covalently cross-linked (Glycyl lysine isopeptide (Lys-Gly) (interchain with G-Cter in ATG12)).

The protein belongs to the ATG5 family. As to quaternary structure, conjugated with ATG12. The ATG5-ATG12 conjugate forms a complex with several units of ATG16. The ATG12-ATG5 conjugate also associates with ATG3. In terms of processing, conjugated to ATG12; which is essential for autophagy. Conjugation with ATG12 involves ATG7 as an E1-like activating enzyme and ATG10 as an E2-like conjugating enzyme.

Its subcellular location is the preautophagosomal structure membrane. In terms of biological role, involved in cytoplasm to vacuole transport (Cvt) and autophagic vesicle formation. Autophagy is essential for maintenance of amino acid levels and protein synthesis under nitrogen starvation. Required for selective autophagic degradation of the nucleus (nucleophagy). Also required for mitophagy, which eliminates defective or superfluous mitochondria in order to fulfill cellular energy requirements and prevent excess ROS production. Conjugation with ATG12, through a ubiquitin-like conjugating system involving ATG7 as an E1-like activating enzyme and ATG10 as an E2-like conjugating enzyme, is essential for its function. The ATG12-ATG5 conjugate acts as an E3-like enzyme which is required for lipidation of ATG8 and ATG8 association to the vesicle membranes. ATG12-ATG5 rearranges the ATG3 catalytic center and enhances its E2 activity. Autophagy is required for proper vegetative growth, asexual/sexual reproduction, and full virulence. Autophagy is particularly involved in the biosynthesis of deoxynivalenol (DON), an important virulence determinant. In Gibberella zeae (strain ATCC MYA-4620 / CBS 123657 / FGSC 9075 / NRRL 31084 / PH-1) (Wheat head blight fungus), this protein is Autophagy-related protein 5.